We begin with the raw amino-acid sequence, 514 residues long: MTDKLIIFDTTLRDGEQSPGASMTKEEKIRIAKHLERMKVDVIEAGFAASSNGDFDAIHTIAGLVKDSTVCSLARANDKDIQRAADALKPANSFRIHTFIATSPLHMEKKLRMTPEQVYEQARLAVRFARKFTDNVEFSPEDGSRSDMDFLCRVLEGVIAEGATTINITDTVGYGVPEMYGNLVKTLRERIPNSDKAIFSVHCHNDLGMAVANSLAGVMIGGARQVECTINGLGERAGNTSLEEIVMAVKTRKDYFGLDVGIDTTQIVPTSKLVSQITGFVVQPNKAVVGANAFAHASGIHQDGVLKARDTYEIMRAEDVGWTANKIVLGKLSGRNAFKQRLQELGVSLDSEAELNAAFMRFKDLADRKSEIFDEDIIAIVSQESALAQEQEHFKFVSLSQHSETGEQPHAKVVFSVDGKEVTGEARGNGPVDATLNAIESEVGSGSELLLYSVNAITTGTQAQGEVTVRLSKSGRIVNGVGTDPDIVAASAKAYIAALNKLHSKDDKLNPQRS.

A Pyruvate carboxyltransferase domain is found at 5–268 (LIIFDTTLRD…DVGIDTTQIV (264 aa)). The Mn(2+) site is built by D14, H202, H204, and N239. The interval 395-514 (KFVSLSQHSE…KDDKLNPQRS (120 aa)) is regulatory domain.

Belongs to the alpha-IPM synthase/homocitrate synthase family. LeuA type 1 subfamily. As to quaternary structure, homodimer. Requires Mn(2+) as cofactor.

The protein localises to the cytoplasm. It catalyses the reaction 3-methyl-2-oxobutanoate + acetyl-CoA + H2O = (2S)-2-isopropylmalate + CoA + H(+). The protein operates within amino-acid biosynthesis; L-leucine biosynthesis; L-leucine from 3-methyl-2-oxobutanoate: step 1/4. Catalyzes the condensation of the acetyl group of acetyl-CoA with 3-methyl-2-oxobutanoate (2-ketoisovalerate) to form 3-carboxy-3-hydroxy-4-methylpentanoate (2-isopropylmalate). In Burkholderia multivorans (strain ATCC 17616 / 249), this protein is 2-isopropylmalate synthase.